Reading from the N-terminus, the 873-residue chain is Potassium voltage-gated channel subfamily KQT member 3 (873 aa).

Residues 1–41 form a disordered region; sequence MGLKARRAAGAAGGGGGEGGGGGGGAANPAGGDSAVAGDEE. Residues 1–121 lie on the Cytoplasmic side of the membrane; it reads MGLKARRAAG…IYDALERPRG (121 aa). A compositionally biased stretch (gly residues) spans 11–26; it reads AAGGGGGEGGGGGGGA. At Thr82 the chain carries Phosphothreonine. A helical membrane pass occupies residues 122–144; sequence WALLYHALVFLIVLGCLILAVLT. Over 145-154 the chain is Extracellular; the sequence is TFKEYETVSG. The helical transmembrane segment at 155 to 176 threads the bilayer; that stretch reads DWLLLLETFAIFIFGAEFALRI. Topologically, residues 177–194 are cytoplasmic; the sequence is WAAGCCCRYKGWRGRLKF. A helical transmembrane segment spans residues 195–214; sequence ARKPLCMLDIFVLIASVPVV. The Extracellular segment spans residues 215-226; sequence AVGNQGNVLATS. The chain crosses the membrane as a helical; Voltage-sensor span at residues 227 to 245; that stretch reads LRSLRFLQILRMLRMDRRG. A 1,2-diacyl-sn-glycero-3-phospho-(1D-myo-inositol-4,5-bisphosphate) is bound at residue Arg244. The Cytoplasmic segment spans residues 246–257; it reads GTWKLLGSAICA. The helical transmembrane segment at 258 to 283 threads the bilayer; the sequence is HSKELITAWYIGFLTLILSSFLVYLV. Residue Lys260 participates in a 1,2-diacyl-sn-glycero-3-phospho-(1D-myo-inositol-4,5-bisphosphate) binding. The Extracellular segment spans residues 284-303; that stretch reads EKDVPEMDAQGEEMKEEFET. Positions 304–316 form an intramembrane region, pore-forming; sequence YADALWWGLITLA. A Selectivity filter motif is present at residues 317 to 322; it reads TIGYGD. Residues 317–327 lie on the Extracellular side of the membrane; it reads TIGYGDKTPKT. The chain crosses the membrane as a helical span at residues 328 to 354; that stretch reads WEGRLIAATFSLIGVSFFALPAGILGS. The Cytoplasmic segment spans residues 355 to 873; sequence GLALKVQEQH…SIWTPSNKPT (519 aa). Residues 357-538 are mediates interaction with calmodulin; sequence ALKVQEQHRQ…RLYKKKFKET (182 aa). Lys367 lines the a 1,2-diacyl-sn-glycero-3-phospho-(1D-myo-inositol-4,5-bisphosphate) pocket. Disordered regions lie at residues 575-603, 723-742, and 766-873; these read PGPP…PRNE, RGGP…GSTY, and ELQG…NKPT. Polar residues-rich tracts occupy residues 588–601, 725–741, and 844–873; these read KGSA…QSPR, GPSS…SGST, and DPFT…NKPT.

Belongs to the potassium channel family. KQT (TC 1.A.1.15) subfamily. Kv7.3/KCNQ3 sub-subfamily. As to quaternary structure, heterotetramer with KCNQ2; forms heterotetrameric M-channel responsible for the native M-current. Interacts with calmodulin; the interaction is calcium-independent, constitutive and participates in the proper assembly of a functional M-channel. Heteromultimer with KCNQ5. May associate with KCNE2. Interacts with IQCJ-SCHIP1. Interacts (via the pore module) with SLC5A3/SMIT1; forms a coregulatory complex that alters ion selectivity, voltage dependence and gating kinetics of the channel. In terms of processing, KCNQ2/KCNQ3 are ubiquitinated by NEDD4L. Ubiquitination leads to protein degradation. Degradation induced by NEDD4L is inhibited by USP36. Expressed in brain and sympathetic ganglia. In brain, expressed in cortex, hippocampus and at much lower levels in cerebellum. In sympathetic ganglia, expressed at approximately equal levels in both superior cervical ganglia and prevertebral ganglia.

It is found in the cell membrane. The catalysed reaction is K(+)(in) = K(+)(out). It carries out the reaction Rb(+)(in) = Rb(+)(out). The enzyme catalyses Cs(+)(in) = Cs(+)(out). It catalyses the reaction Na(+)(in) = Na(+)(out). Its activity is regulated as follows. Phosphatidylinositol-4,5-bisphosphate (PIP2) potentiates the activation of KCNQ channels by enhancing the electro-mechanical coupling of the voltage-sensing domain (VSD) and the pore-forming domain (PD). In the closed state of the channel, PIP2 is anchored at the S2-S3 loop; upon channel activation, PIP2 interacts with the S4-S5 linker and is involved in channel gating. Calcium suppresses KCNQ2-KCNQ3 channel currents, with calcium-bound calmodulin inducing a change in channel configuration which leads to the reduction of channel affinity for PIP2 and subsequent current suppression. M-channel is blocked by XE991. In terms of biological role, pore-forming subunit of the voltage-gated potassium (Kv) M-channel which is responsible for the M-current, a key controller of neuronal excitability. M-channel is composed of pore-forming subunits KCNQ2 and KCNQ3 assembled as heterotetramers, each subunit containing a voltage sensing domain (VSD) and a pore-forming domain (PD). The native M-current has a slowly activating and deactivating potassium conductance which plays a critical role in determining the subthreshold electrical excitability of neurons as well as the responsiveness to synaptic inputs. M-channel is selectively permeable in vitro to other cations besides potassium, in decreasing order of affinity K(+) &gt; Rb(+) &gt; Cs(+) &gt; Na(+). M-channel association with SLC5A3/SMIT1 alters channel ion selectivity, increasing Na(+) and Cs(+) permeation relative to K(+). Suppressed by activation of M1 muscarinic acetylcholine receptors. KCNQ3 also associates with KCNQ5 to form a functional channel in vitro and may also contribute to the M-current in brain. In Rattus norvegicus (Rat), this protein is Potassium voltage-gated channel subfamily KQT member 3.